A 445-amino-acid chain; its full sequence is Phosphoglucosamine mutase (445 aa).

Ser-102 (phosphoserine intermediate) is an active-site residue. Mg(2+) contacts are provided by Ser-102, Asp-241, Asp-243, and Asp-245. Ser-102 carries the phosphoserine modification.

The protein belongs to the phosphohexose mutase family. The cofactor is Mg(2+). Post-translationally, activated by phosphorylation.

It catalyses the reaction alpha-D-glucosamine 1-phosphate = D-glucosamine 6-phosphate. In terms of biological role, catalyzes the conversion of glucosamine-6-phosphate to glucosamine-1-phosphate. The polypeptide is Phosphoglucosamine mutase (Cronobacter sakazakii (strain ATCC BAA-894) (Enterobacter sakazakii)).